A 392-amino-acid polypeptide reads, in one-letter code: Serine protease ea (392 aa).

The N-terminal stretch at 1–19 (MLKPSIICLFLGILAKSSA) is a signal peptide. A propeptide spans 20 to 127 (GQFYFPNEAA…GQCGNILSNR (108 aa)) (activation peptide). In terms of domain architecture, Clip spans 36–89 (RCITPNRERALCIHLEDCKYLYGLLTTTPLRDTDRLYLSRSQCGYTNGKVLICC). 3 disulfide bridges follow: Cys37/Cys88, Cys47/Cys78, and Cys53/Cys89. Asn107 is a glycosylation site (N-linked (GlcNAc...) asparagine). Cystine bridges form between Cys120–Cys260, Cys158–Cys174, Cys202–Cys212, Cys307–Cys324, and Cys334–Cys367. The Peptidase S1 domain maps to 128 to 391 (IYGGMKTKID…YVDWIQNTIE (264 aa)). His173 acts as the Charge relay system in catalysis. 4 residues coordinate Ca(2+): Glu193, Asp195, Thr198, and Asp201. The active-site Charge relay system is Asp240. Catalysis depends on Ser338, which acts as the Charge relay system.

Belongs to the peptidase S1 family. CLIP subfamily. Interacts with Spn27A; the two proteins are covalently linked leading to inhibition of ea catalytic activity. Interacts (via Peptidase domain) with snk (via N-terminal prodomain); leads to proteolytic activation of ea by snk. Sulfation of a vitelline membrane component by pip is required for proteolytic cleavage of ea by snk but not for the interaction of ea with snk. In terms of processing, proteolytically cleaved by snk. Activation peptide and active catalytic domain remain associated by a disulfide bond. Processed ea/easter is present in extremely low amounts in the early embryo as it is rapidly converted into a high molecular mass complex made up of ea covalently bound to the serpin Spn27A. Zymogen activation is also controlled by a negative feedback loop from Dorsal.

It localises to the secreted. Activated proteolytically by snk; activation requires both activation of the ndl-gd-snk protease cascade and sulfation of a vitelline membrane component by pip. Inhibited by binding of the serpin Spn27A. Its function is as follows. Component of the extracellular signaling pathway that establishes the dorsal-ventral pathway of the embryo. A protease cascade involving ndl, gd, snk and ea results in activation of the spz Toll receptor ligand; acts downstream of ndl, gd and snk and is required for proteolytic processing of spz. Activation of ea requires both activation of the ndl-gd-snk protease cascade and sulfation of a vitelline membrane component by pip. Localized activation of the Toll receptor in the ventral region of the embryo defines cell identities along the dorsal-ventral continuum. This Drosophila melanogaster (Fruit fly) protein is Serine protease ea.